A 542-amino-acid polypeptide reads, in one-letter code: MGPGARLALLALLALGGDPAAATGREDTFSALTSVARALAPERRLLGTLRRYLRGEEARLRDLTRFYDKVLSLHEDLKIPVVNPLLAFTVIKRLQSDWRNVVHSLEATENIRALKDGYEKVEQDLPAFEDLEGAARALMRLQDVYMLNVKGLARGVFQRVTGSSITDLYSPRQLFSLTADDCFQVGKVAYDTGDYYHAIPWLEEAVSLFRRAHGEWKTEDEASLEDALDYLAFACFQVGNVSCALSLSREFLVYSPDNKRMARNVLKYERLLAENGHQMAAETAIQRPNVPHLQTRDTYEGLCQTLGSQPTHYQIPSLYCSYETNSSPYLLLQPARKEVVHLRPLIALYHDFVSDEEAQKIRELAEPWLQRSVVASGEKQLQVEYRISKSAWLKDTVDPMLVTLDHRIAALTGLDIQPPYAEYLQVVNYGIGGHYEPHFDHATSPSSPLYRMKSGNRVATFMIYLSSVEAGGATAFIYGNFSVPVVKNAALFWWNLHRSGEGDGDTLHAGCPVLVGDKWVANKWIHEYGQEFRRPCSTNPED.

Residues 1 to 24 (MGPGARLALLALLALGGDPAAATG) form the signal peptide. The stretch at 105–129 (LEATENIRALKDGYEKVEQDLPAFE) forms a coiled coil. One copy of the TPR repeat lies at 225–258 (EDALDYLAFACFQVGNVSCALSLSREFLVYSPDN). N-linked (GlcNAc...) asparagine glycosylation is present at N240. The Fe2OG dioxygenase domain maps to 420–527 (YAEYLQVVNY…KWVANKWIHE (108 aa)). H438 and D440 together coordinate Fe cation. N-linked (GlcNAc...) asparagine glycosylation is present at N480. Residue H508 participates in Fe cation binding. K518 provides a ligand contact to 2-oxoglutarate.

This sequence belongs to the P4HA family. Heterotetramer of two alpha-3 chains and two beta chains (the beta chain is the multi-functional PDI). Fe(2+) serves as cofactor. L-ascorbate is required as a cofactor. In terms of processing, N-glycosylation plays no role in the catalytic activity.

Its subcellular location is the endoplasmic reticulum lumen. The enzyme catalyses L-prolyl-[collagen] + 2-oxoglutarate + O2 = trans-4-hydroxy-L-prolyl-[collagen] + succinate + CO2. Catalyzes the post-translational formation of 4-hydroxyproline in -Xaa-Pro-Gly- sequences in collagens and other proteins. The chain is Prolyl 4-hydroxylase subunit alpha-3 (P4ha3) from Mus musculus (Mouse).